A 442-amino-acid chain; its full sequence is Cell adhesion molecule 1 (442 aa).

Residues 1 to 44 form the signal peptide; that stretch reads MASVVLPSGSQCAAAAAAAAPPGLRLRLLLLLFSAAALIPTGDG. The Ig-like V-type domain maps to 45-139; the sequence is QNLFTKDVTV…PPQESYTTIT (95 aa). The Extracellular portion of the chain corresponds to 45-374; it reads QNLFTKDVTV…EEGSIRAVDH (330 aa). Residues Cys-64 and Cys-124 are joined by a disulfide bond. N-linked (GlcNAc...) asparagine glycans are attached at residues Asn-67, Asn-101, Asn-113, and Asn-165. Ig-like C2-type domains lie at 144–238 and 243–329; these read PRNL…RYLE and PQVH…YMLY. 2 cysteine pairs are disulfide-bonded: Cys-166-Cys-220 and Cys-267-Cys-313. 2 N-linked (GlcNAc...) asparagine glycosylation sites follow: Asn-304 and Asn-308. A helical transmembrane segment spans residues 375–395; sequence AVIGGVVAVVVFAMLCLLIIL. Residues 396 to 442 are Cytoplasmic-facing; that stretch reads GRYFARHKGTYFTHEAKGADDAADADTAIINAEGGQNNSEEKKEYFI. A Phosphothreonine modification is found at Thr-422. Residue Ser-434 is modified to Phosphoserine.

It belongs to the nectin family. In terms of assembly, homodimer (via Ig-like V-type domain). Interacts with FARP1. Interacts (via Ig-like V-type domain) with CRTAM (via Ig-like V-type domain); the interaction competes with CRTAM homodimerization and CADM1 homodimerization. Interacts (via C-terminus) with EPB41L3/DAL1. The interaction with EPB41L3/DAL1 may act to anchor CADM1 to the actin cytoskeleton. Interacts (via C-terminus) with MPP2 (via PDZ domain). Interacts (via C-terminus) with MPP3 (via PDZ domain); this interaction connects CADM1 with DLG1. Interacts (via C-terminus) with PALS2 (via PDZ domain). As to quaternary structure, (Microbial infection) Interacts with herpes virus 8 proteins vFLIP and vGPCR; these interactions are essential for NF-kappa-B activation. Glycosylation at Asn-67 and Asn-101 promotes adhesive binding and synapse induction.

Its subcellular location is the cell membrane. The protein localises to the synapse. Mediates homophilic cell-cell adhesion in a Ca(2+)-independent manner. Also mediates heterophilic cell-cell adhesion with CADM3 and NECTIN3 in a Ca(2+)-independent manner. Interaction with CRTAM promotes natural killer (NK) cell cytotoxicity and interferon-gamma (IFN-gamma) secretion by CD8+ cells in vitro as well as NK cell-mediated rejection of tumors expressing CADM1 in vivo. In mast cells, may mediate attachment to and promote communication with nerves. CADM1, together with MITF, is essential for development and survival of mast cells in vivo. By interacting with CRTAM and thus promoting the adhesion between CD8+ T-cells and CD8+ dendritic cells, regulates the retention of activated CD8+ T-cell within the draining lymph node. Required for the intestinal retention of intraepithelial CD4+ CD8+ T-cells and, to a lesser extent, intraepithelial and lamina propria CD8+ T-cells and CD4+ T-cells. Interaction with CRTAM promotes the adhesion to gut-associated CD103+ dendritic cells, which may facilitate the expression of gut-homing and adhesion molecules on T-cells and the conversion of CD4+ T-cells into CD4+ CD8+ T-cells. Acts as a synaptic cell adhesion molecule and plays a role in the formation of dendritic spines and in synapse assembly. May be involved in neuronal migration, axon growth, pathfinding, and fasciculation on the axons of differentiating neurons. May play diverse roles in the spermatogenesis including in the adhesion of spermatocytes and spermatids to Sertoli cells and for their normal differentiation into mature spermatozoa. Acts as a tumor suppressor in non-small-cell lung cancer (NSCLC) cells. May contribute to the less invasive phenotypes of lepidic growth tumor cells. Its function is as follows. (Microbial infection) Induces cell fusion in neuron infected by a neuropathogenic strain of measles. Interacts with measles hemagglutinin to trigger hyperfusogenic F-mediated membrane fusion and presumably transsynaptic cell-to-cell transmission of the virus. The sequence is that of Cell adhesion molecule 1 from Homo sapiens (Human).